The chain runs to 679 residues: Methionine--tRNA ligase (679 aa).

The 'HIGH' region motif lies at 15-25 (PYANGPVHIGH). Residues cysteine 147, cysteine 150, cysteine 160, and cysteine 163 each coordinate Zn(2+). Residues 332–336 (KISTS) carry the 'KMSKS' region motif. ATP is bound at residue threonine 335. In terms of domain architecture, tRNA-binding spans 578–679 (DFMKLDIRVG…KEVKPGSEVK (102 aa)).

Belongs to the class-I aminoacyl-tRNA synthetase family. MetG type 1 subfamily. As to quaternary structure, homodimer. Zn(2+) is required as a cofactor.

It is found in the cytoplasm. The enzyme catalyses tRNA(Met) + L-methionine + ATP = L-methionyl-tRNA(Met) + AMP + diphosphate. Is required not only for elongation of protein synthesis but also for the initiation of all mRNA translation through initiator tRNA(fMet) aminoacylation. This Parabacteroides distasonis (strain ATCC 8503 / DSM 20701 / CIP 104284 / JCM 5825 / NCTC 11152) protein is Methionine--tRNA ligase.